The following is a 208-amino-acid chain: Protein GrpE (208 aa).

Residues 1–25 (MVDNKDFNEELKENIQEELDNETKA) show a composition bias toward basic and acidic residues. Positions 1–38 (MVDNKDFNEELKENIQEELDNETKAENPNIDEEVEEVS) are disordered. Acidic residues predominate over residues 29–38 (NIDEEVEEVS).

It belongs to the GrpE family. As to quaternary structure, homodimer.

The protein resides in the cytoplasm. In terms of biological role, participates actively in the response to hyperosmotic and heat shock by preventing the aggregation of stress-denatured proteins, in association with DnaK and GrpE. It is the nucleotide exchange factor for DnaK and may function as a thermosensor. Unfolded proteins bind initially to DnaJ; upon interaction with the DnaJ-bound protein, DnaK hydrolyzes its bound ATP, resulting in the formation of a stable complex. GrpE releases ADP from DnaK; ATP binding to DnaK triggers the release of the substrate protein, thus completing the reaction cycle. Several rounds of ATP-dependent interactions between DnaJ, DnaK and GrpE are required for fully efficient folding. This chain is Protein GrpE, found in Clostridium perfringens (strain ATCC 13124 / DSM 756 / JCM 1290 / NCIMB 6125 / NCTC 8237 / Type A).